A 175-amino-acid chain; its full sequence is MNPYILTPDLNGEGLHIGIVRARFNEEIGQAELDACLQKLGELGVDERDIMVVTVPGALELGVALSHMAETFEFDALIALGAVIRGETYHFEVVSNEMARAISRISLETGIPVANGVLTVDTDEQAQARAAGKGGDCALVAVEMANLVAALEPEEDDEDEDEEDEDFDDEETDRR.

5-amino-6-(D-ribitylamino)uracil is bound by residues Phe-24, 58–60 (ALE), and 82–84 (AVI). 87 to 88 (ET) contributes to the (2S)-2-hydroxy-3-oxobutyl phosphate binding site. Catalysis depends on His-90, which acts as the Proton donor. Asn-115 serves as a coordination point for 5-amino-6-(D-ribitylamino)uracil. Arg-129 is a binding site for (2S)-2-hydroxy-3-oxobutyl phosphate. Residues 151–175 (LEPEEDDEDEDEEDEDFDDEETDRR) form a disordered region. The segment covering 152 to 175 (EPEEDDEDEDEEDEDFDDEETDRR) has biased composition (acidic residues).

The protein belongs to the DMRL synthase family.

It carries out the reaction (2S)-2-hydroxy-3-oxobutyl phosphate + 5-amino-6-(D-ribitylamino)uracil = 6,7-dimethyl-8-(1-D-ribityl)lumazine + phosphate + 2 H2O + H(+). It participates in cofactor biosynthesis; riboflavin biosynthesis; riboflavin from 2-hydroxy-3-oxobutyl phosphate and 5-amino-6-(D-ribitylamino)uracil: step 1/2. In terms of biological role, catalyzes the formation of 6,7-dimethyl-8-ribityllumazine by condensation of 5-amino-6-(D-ribitylamino)uracil with 3,4-dihydroxy-2-butanone 4-phosphate. This is the penultimate step in the biosynthesis of riboflavin. The chain is 6,7-dimethyl-8-ribityllumazine synthase from Bordetella petrii (strain ATCC BAA-461 / DSM 12804 / CCUG 43448).